The primary structure comprises 804 residues: Endoplasmin (804 aa).

The N-terminal stretch at 1-21 (MRALWVLGLCCVLLTFGSVRA) is a signal peptide. Positions 42–44 (SRT) match the SRT pseudosubstrate motif motif. The N-linked (GlcNAc...) asparagine glycan is linked to Asn62. Ser64 is subject to Phosphoserine. A glycan (N-linked (GlcNAc...) asparagine) is linked at Asn107. Positions 107, 149, and 162 each coordinate ATP. Lys168 carries the N6-(2-hydroxyisobutyryl)lysine modification. Phosphoserine is present on Ser172. Residue Phe199 participates in ATP binding. Residue Asn217 is glycosylated (N-linked (GlcNAc...) asparagine). A disordered region spans residues 288–323 (TVEEPMEEEEAAKEEKEESDDEAAVEEEEEEKKPKT). Residues 289-317 (VEEPMEEEEAAKEEKEESDDEAAVEEEEE) are compositionally biased toward acidic residues. 2 positions are modified to phosphoserine: Ser306 and Ser403. Position 404 is an N6-succinyllysine (Lys404). Asn445 carries N-linked (GlcNAc...) asparagine glycosylation. A Phosphoserine modification is found at Ser447. An N6-acetyllysine modification is found at Lys479. N-linked (GlcNAc...) asparagine glycans are attached at residues Asn481 and Asn502. An N6-succinyllysine modification is found at Lys633. Residues 750-804 (DPDAKVEEEPEEEPEETTEDTTEDTEQDEDEEMDVGTDEEEQETAKESTAEKDEL) form a disordered region. Acidic residues predominate over residues 757-791 (EEPEEEPEETTEDTTEDTEQDEDEEMDVGTDEEEQ). Thr786 carries the post-translational modification Phosphothreonine. Basic and acidic residues predominate over residues 792–804 (ETAKESTAEKDEL). The Prevents secretion from ER motif lies at 801–804 (KDEL).

It belongs to the heat shock protein 90 family. Homodimer; disulfide-linked. Component of an EIF2 complex at least composed of CELF1/CUGBP1, CALR, CALR3, EIF2S1, EIF2S2, HSP90B1 and HSPA5. Part of a large chaperone multiprotein complex comprising DNAJB11, HSP90B1, HSPA5, HYOU, PDIA2, PDIA4, PDIA6, PPIB, SDF2L1, UGGT1 and very small amounts of ERP29, but not, or at very low levels, CALR nor CANX. Interacts with AIMP1; regulates its retention in the endoplasmic reticulum. Hyperglycosylated form interacts with OS9; promoting its degradation by the endoplasmic reticulum associated degradation (ERAD). Interacts with CNPY3. This interaction is disrupted in the presence of ATP. Interacts with TLR4 and TLR9, but not with TLR3. Interacts with MZB1 in a calcium-dependent manner. Interacts with METTL23. Interacts with IL1B; the interaction facilitates cargo translocation into the ERGIC. Interacts with EIF2AK3. Phosphorylated by CK2. Post-translationally, N-glycosylated cotranslationally at Asn-217 by STT3A-containing OST-A complex: this glycosylation is constitutive. In response to various stress, 5 additional facultative sites (Asn-62, Asn-107, Asn-445, Asn-481 and Asn-502) can be glycosylated post-translationally by STT3B-containing OST-B complex, leading to a hyperglycosylated form that is degraded by the ER-associated degradation (ERAD) pathway. In normal conditions, the OST-A complex together with CCDC134 prevent glycosylation at facultative sites during protein folding, thereby preventing hyperglycosylation. Mechanistically, nascent HSP90B1 is tethered during translation to a specialized CCDC134-containing translocon that forms a microenvironment for its folding, in which STT3A associates with the SRT pseudosubstrate motif, and prevents access to facultative glycosylation sites until folding is completed, rendering its facultative sites inaccessible to the OST-B complex.

It is found in the endoplasmic reticulum lumen. It localises to the sarcoplasmic reticulum lumen. The protein resides in the melanosome. It carries out the reaction ATP + H2O = ADP + phosphate + H(+). ATP-dependent chaperone involved in the processing of proteins in the endoplasmic reticulum, regulating their transport. Together with MESD, acts as a modulator of the Wnt pathway by promoting the folding of LRP6, a coreceptor of the canonical Wnt pathway. When associated with CNPY3, required for proper folding of Toll-like receptors. Promotes folding and trafficking of TLR4 to the cell surface. May participate in the unfolding of cytosolic leaderless cargos (lacking the secretion signal sequence) such as the interleukin 1/IL-1 to facilitate their translocation into the ERGIC (endoplasmic reticulum-Golgi intermediate compartment) and secretion; the translocation process is mediated by the cargo receptor TMED10. The polypeptide is Endoplasmin (HSP90B1) (Pongo abelii (Sumatran orangutan)).